We begin with the raw amino-acid sequence, 348 residues long: 3-isopropylmalate dehydrogenase (348 aa).

76–87 (GPKWTDPNNRPE) serves as a coordination point for NAD(+). Positions 94, 104, 132, and 217 each coordinate substrate. Positions 217, 241, and 245 each coordinate Mg(2+). 275-287 (GSAPDIAGKNVAN) is an NAD(+) binding site.

This sequence belongs to the isocitrate and isopropylmalate dehydrogenases family. LeuB type 1 subfamily. Homodimer. Mg(2+) is required as a cofactor. The cofactor is Mn(2+).

The protein resides in the cytoplasm. It catalyses the reaction (2R,3S)-3-isopropylmalate + NAD(+) = 4-methyl-2-oxopentanoate + CO2 + NADH. It functions in the pathway amino-acid biosynthesis; L-leucine biosynthesis; L-leucine from 3-methyl-2-oxobutanoate: step 3/4. Catalyzes the oxidation of 3-carboxy-2-hydroxy-4-methylpentanoate (3-isopropylmalate) to 3-carboxy-4-methyl-2-oxopentanoate. The product decarboxylates to 4-methyl-2 oxopentanoate. The sequence is that of 3-isopropylmalate dehydrogenase from Staphylococcus aureus (strain NCTC 8325 / PS 47).